Reading from the N-terminus, the 20-residue chain is Venom prothrombin activator notanarin-D (20 aa).

The Gla domain occupies 1 to 10; sequence SNSLFEEVRP. 4-carboxyglutamate is present on residues E6 and E7. Positions 11–20 constitute a Peptidase S1 domain; it reads IVNGMDCKLG.

This sequence belongs to the peptidase S1 family. Snake venom subfamily. Heterodimer of a light chain and a heavy chain; disulfide-linked. In terms of processing, gamma-carboxyglutamate residues are formed by vitamin K dependent carboxylation. These residues are essential for the binding of calcium. Expressed by the venom gland.

The protein localises to the secreted. The catalysed reaction is Selective cleavage of Arg-|-Thr and then Arg-|-Ile bonds in prothrombin to form thrombin.. Functionally, snake prothrombin activator that attacks the hemostatic system of prey. This protein is functionally similar to blood coagulation factor Xa. This Notechis scutatus niger (Peninsula tiger snake) protein is Venom prothrombin activator notanarin-D.